The following is a 452-amino-acid chain: Bifunctional protein GlmU (452 aa).

Residues 1–218 form a pyrophosphorylase region; it reads MKVLILAAGL…IVEVSGVNDR (218 aa). Residues 6–9, K20, Q68, 73–74, 95–97, G134, E147, N162, and N216 contribute to the UDP-N-acetyl-alpha-D-glucosamine site; these read LAAG, GT, and YGD. D97 is a binding site for Mg(2+). Residue N216 coordinates Mg(2+). The segment at 219 to 239 is linker; sequence IQLAQLETIAKQRILEKLMLS. The interval 240–452 is N-acetyltransferase; the sequence is GVTIVDPNST…EELKNADHKE (213 aa). Residues R321 and K339 each contribute to the UDP-N-acetyl-alpha-D-glucosamine site. H351 serves as the catalytic Proton acceptor. Positions 354 and 365 each coordinate UDP-N-acetyl-alpha-D-glucosamine. Acetyl-CoA contacts are provided by residues A368, 374 to 375, S393, A411, and R428; that span reads NY.

It in the N-terminal section; belongs to the N-acetylglucosamine-1-phosphate uridyltransferase family. This sequence in the C-terminal section; belongs to the transferase hexapeptide repeat family. In terms of assembly, homotrimer. Mg(2+) serves as cofactor.

It localises to the cytoplasm. It catalyses the reaction alpha-D-glucosamine 1-phosphate + acetyl-CoA = N-acetyl-alpha-D-glucosamine 1-phosphate + CoA + H(+). The catalysed reaction is N-acetyl-alpha-D-glucosamine 1-phosphate + UTP + H(+) = UDP-N-acetyl-alpha-D-glucosamine + diphosphate. It participates in nucleotide-sugar biosynthesis; UDP-N-acetyl-alpha-D-glucosamine biosynthesis; N-acetyl-alpha-D-glucosamine 1-phosphate from alpha-D-glucosamine 6-phosphate (route II): step 2/2. Its pathway is nucleotide-sugar biosynthesis; UDP-N-acetyl-alpha-D-glucosamine biosynthesis; UDP-N-acetyl-alpha-D-glucosamine from N-acetyl-alpha-D-glucosamine 1-phosphate: step 1/1. It functions in the pathway bacterial outer membrane biogenesis; LPS lipid A biosynthesis. Its function is as follows. Catalyzes the last two sequential reactions in the de novo biosynthetic pathway for UDP-N-acetylglucosamine (UDP-GlcNAc). The C-terminal domain catalyzes the transfer of acetyl group from acetyl coenzyme A to glucosamine-1-phosphate (GlcN-1-P) to produce N-acetylglucosamine-1-phosphate (GlcNAc-1-P), which is converted into UDP-GlcNAc by the transfer of uridine 5-monophosphate (from uridine 5-triphosphate), a reaction catalyzed by the N-terminal domain. The polypeptide is Bifunctional protein GlmU (Fervidobacterium nodosum (strain ATCC 35602 / DSM 5306 / Rt17-B1)).